Reading from the N-terminus, the 245-residue chain is 4-hydroxy-tetrahydrodipicolinate reductase (245 aa).

Residues 7 to 12 (GAKGKV), aspartate 33, 75 to 77 (GTT), and 102 to 105 (APNF) each bind NAD(+). The Proton donor/acceptor role is filled by histidine 132. Histidine 133 lines the (S)-2,3,4,5-tetrahydrodipicolinate pocket. Catalysis depends on lysine 136, which acts as the Proton donor. Residue 142 to 143 (GT) coordinates (S)-2,3,4,5-tetrahydrodipicolinate.

Belongs to the DapB family.

Its subcellular location is the cytoplasm. It carries out the reaction (S)-2,3,4,5-tetrahydrodipicolinate + NAD(+) + H2O = (2S,4S)-4-hydroxy-2,3,4,5-tetrahydrodipicolinate + NADH + H(+). The catalysed reaction is (S)-2,3,4,5-tetrahydrodipicolinate + NADP(+) + H2O = (2S,4S)-4-hydroxy-2,3,4,5-tetrahydrodipicolinate + NADPH + H(+). It participates in amino-acid biosynthesis; L-lysine biosynthesis via DAP pathway; (S)-tetrahydrodipicolinate from L-aspartate: step 4/4. In terms of biological role, catalyzes the conversion of 4-hydroxy-tetrahydrodipicolinate (HTPA) to tetrahydrodipicolinate. The sequence is that of 4-hydroxy-tetrahydrodipicolinate reductase from Mycolicibacterium paratuberculosis (strain ATCC BAA-968 / K-10) (Mycobacterium paratuberculosis).